A 170-amino-acid polypeptide reads, in one-letter code: Cyclic pyranopterin monophosphate synthase (170 aa).

Substrate-binding positions include 89–91 and 125–126; these read LCH and ME. Asp140 is an active-site residue.

It belongs to the MoaC family. Homohexamer; trimer of dimers.

It catalyses the reaction (8S)-3',8-cyclo-7,8-dihydroguanosine 5'-triphosphate = cyclic pyranopterin phosphate + diphosphate. It participates in cofactor biosynthesis; molybdopterin biosynthesis. In terms of biological role, catalyzes the conversion of (8S)-3',8-cyclo-7,8-dihydroguanosine 5'-triphosphate to cyclic pyranopterin monophosphate (cPMP). This chain is Cyclic pyranopterin monophosphate synthase, found in Streptomyces coelicolor (strain ATCC BAA-471 / A3(2) / M145).